The primary structure comprises 429 residues: Protein ABERRANT PANICLE ORGANIZATION 1 (429 aa).

Pro residues predominate over residues methionine 1 to proline 11. The segment at methionine 1–aspartate 21 is disordered. Residues proline 25 to histidine 71 enclose the F-box domain. 2 helical membrane passes run leucine 72–leucine 92 and valine 112–leucine 132. Kelch repeat units follow at residues methionine 229–glycine 277, arginine 284–glycine 339, and tyrosine 350–glycine 397.

Part of a putative SCF (ASK/Cullin/F-box) ubiquitin ligase complex. Interacts with FL/APO2. In terms of tissue distribution, expressed in apical meristems and the lateral organ primordia throughout development. Expressed in seedlings, roots, leaves, shoot apical meristem (SAM), developing panicles, and, at lower levels, in developing seeds.

It localises to the membrane. It participates in protein modification; protein ubiquitination. In terms of biological role, component of SCF(ASK-cullin-F-box) E3 ubiquitin ligase complexes, which may mediate the ubiquitination and subsequent proteasomal degradation of target proteins. Together with FL/APO2, involved in the temporal regulation of meristem identity during both vegetative and reproductive developments in an APO2-dependent manner. Promotes spikelet formation by suppressing the precocious conversion of inflorescence meristems to spikelet meristems, probably via a positive regulation of class-C floral homeotic genes, but not of class-B genes, and through the control of cell proliferation in meristems. Mediates culm development and strength/diameter enhancement at internodes. Required for the regulation of the plastochron, floral organ identity, and floral determinacy. Controls the number of primary rachis branches (PRBs). May trigger the formation of vascular bundle systems which, consequently, promote carbohydrate translocation to panicles. Involved in ozone-induced grain yield regulation. This is Protein ABERRANT PANICLE ORGANIZATION 1 from Oryza sativa subsp. japonica (Rice).